A 656-amino-acid chain; its full sequence is Pumilio homology domain family member 6 (656 aa).

The segment at 1 to 107 is disordered; sequence MAPLTKKTNG…GGENGNHTEQ (107 aa). A compositionally biased stretch (basic and acidic residues) spans 13–23; sequence SAKEVSHSEKK. Residues S31, S34, and S35 each carry the phosphoserine; by CK2 modification. S34 and S35 each carry phosphoserine. A compositionally biased stretch (acidic residues) spans 52 to 89; sequence SDDDDLDDLSTSDSEAEEEADELDISDDSEEHENENEE. Over residues 90–107 the composition is skewed to basic and acidic residues; sequence KEGKDKSEGGENGNHTEQ. The PUM-HD domain occupies 133 to 483; sequence RLRVKTPPLP…ELLSKFAPMF (351 aa). Pumilio repeat units follow at residues 155–191, 192–227, 228–264, 340–376, 377–413, and 415–450; these read ELSK…QIVD, ALKG…TIIN, ELHG…QMIK, ELLH…LILK, ALKN…KTFS, and TVKE…PIVK.

This sequence belongs to the PUF6 family. As to quaternary structure, component of the ASH1 mRNP composed of at least PUF6, SHE2, SHE3, SHE1 and the ASH1 mRNA. Interacts with SHE2 and FUN12. Post-translationally, phosphorylation by CK2 relieves translational repression activity.

It localises to the bud tip. Its subcellular location is the nucleus. It is found in the nucleolus. In terms of biological role, RNA-binding protein involved in post-transcriptional regulation. Component of the ASH1 mRNP which transports the ASH1 mRNA to the distal tip of the bud, where the ASH1 protein is translated and targeted to the daughter cell nucleus. Binds to the ASH1 3'-UTR containing the PUF consensus UUGU segment and represses its translation. This silencing of ASH1 mRNA is critical for asymmetric seggregation of ASH1 to the daughter cell nucleus. This chain is Pumilio homology domain family member 6 (PUF6), found in Saccharomyces cerevisiae (strain ATCC 204508 / S288c) (Baker's yeast).